We begin with the raw amino-acid sequence, 287 residues long: Festuclavine synthase I (287 aa).

Belongs to the fgaFS/easG family.

The catalysed reaction is festuclavine + NAD(+) = 6,8-dimethyl-6,7-didehydroergoline + NADH + H(+). It functions in the pathway alkaloid biosynthesis; ergot alkaloid biosynthesis. In terms of biological role, festuclavine synthase; part of the gene cluster that mediates the biosynthesis of isofumigaclavines, fungal ergot alkaloids. The tryptophan dimethylallyltransferase ifgA catalyzes the first step of ergot alkaloid biosynthesis by condensing dimethylallyl diphosphate (DMAP) and tryptophan to form 4-dimethylallyl-L-tryptophan. The second step is catalyzed by the methyltransferase ifgB that methylates 4-dimethylallyl-L-tryptophan in the presence of S-adenosyl-L-methionine, resulting in the formation of N-methyl-dimethylallyl-L-tryptophan. The catalase ifgD and the FAD-dependent oxidoreductase ifgC then transform N-methyl-dimethylallyl-L-tryptophan to chanoclavine-I which is further oxidized by ifgE in the presence of NAD(+), resulting in the formation of chanoclavine-I aldehyde. The chanoclavine-I aldehyde reductases ifgG and/or fgaOx3 reduce chanoclavine-I aldehyde to dihydrochanoclavine-I aldehyde that spontaneously dehydrates to form 6,8-dimethyl-6,7-didehydroergoline. The festuclavine dehydrogenases ifgF1 and/or ifgF2 then catalyze the reduction of 6,8-dimethyl-6,7-didehydroergoline to form festuclavine. Hydrolysis of festuclavine by a yet undetermined cytochrome P450 monooxygenase (called ifgH) then leads to the formation of isofumigaclavine B which is in turn acetylated by ifgI to isofumigaclavine A. Penicillium roqueforti has interestingly at least two sets of genes for the consumption of chanoclavine-I aldehyde on three different loci, the OYEs ifgG/fgaOx3 and the festuclavine synthase homologs ifgF1/ifgF2. The reason for the duplication of these genes is unclear, probably to ensure the conversion of chanoclavine-I aldehyde by differential gene expression under various environmental conditions. The polypeptide is Festuclavine synthase I (Penicillium roqueforti (strain FM164)).